The following is a 194-amino-acid chain: MALVPVVVEQTSRGERSYDIFSRLLKERIIFLGDEINDVTASLLVAQLLFLEAEDPDKDIQIYINSPGGSITAGMAIYDTMNYIKPDVSTICVGMAASMGAFLLAAGAKGKRFALPNAEVMIHQPLGGTRGQAEDIRIHAERIVKLRDTLNKILVERTGQPLERVQKDTDRDFFMEAKEAKEYGIIDEVISSRK.

Residue Ser-98 is the Nucleophile of the active site. Residue His-123 is part of the active site.

Belongs to the peptidase S14 family. Fourteen ClpP subunits assemble into 2 heptameric rings which stack back to back to give a disk-like structure with a central cavity, resembling the structure of eukaryotic proteasomes.

The protein resides in the cytoplasm. The catalysed reaction is Hydrolysis of proteins to small peptides in the presence of ATP and magnesium. alpha-casein is the usual test substrate. In the absence of ATP, only oligopeptides shorter than five residues are hydrolyzed (such as succinyl-Leu-Tyr-|-NHMec, and Leu-Tyr-Leu-|-Tyr-Trp, in which cleavage of the -Tyr-|-Leu- and -Tyr-|-Trp bonds also occurs).. Functionally, cleaves peptides in various proteins in a process that requires ATP hydrolysis. Has a chymotrypsin-like activity. Plays a major role in the degradation of misfolded proteins. The protein is ATP-dependent Clp protease proteolytic subunit of Alkaliphilus metalliredigens (strain QYMF).